Here is a 335-residue protein sequence, read N- to C-terminus: UPF0104 membrane protein PH1989 (335 aa).

Helical transmembrane passes span 4-24 (YLLI…AGIE), 34-54 (DIRF…IWAV), 62-82 (GANI…GIFL), 122-142 (ILDV…ALTI), 148-168 (LIIL…TTVF), 231-251 (LYSF…FLSL), 266-286 (ASIA…TEVV), and 304-324 (VTML…GILV).

It belongs to the UPF0104 family.

The protein resides in the cell membrane. This is UPF0104 membrane protein PH1989 from Pyrococcus horikoshii (strain ATCC 700860 / DSM 12428 / JCM 9974 / NBRC 100139 / OT-3).